Reading from the N-terminus, the 116-residue chain is Large ribosomal subunit protein uL18 (116 aa).

Belongs to the universal ribosomal protein uL18 family. In terms of assembly, part of the 50S ribosomal subunit; part of the 5S rRNA/L5/L18/L25 subcomplex. Contacts the 5S and 23S rRNAs.

This is one of the proteins that bind and probably mediate the attachment of the 5S RNA into the large ribosomal subunit, where it forms part of the central protuberance. This Cellvibrio japonicus (strain Ueda107) (Pseudomonas fluorescens subsp. cellulosa) protein is Large ribosomal subunit protein uL18.